The sequence spans 408 residues: MDKLLERFLNYVSLDTQSKAGVRQVPSTEGQWKLLHLLKEQLEEMGLINVTLSEKGTLMATLPANVPGDIPAIGFISHVDTSPDCSGKNVNPQIVENYRGGDIALGIGDEVLSPVMFPVLHQLLGQTLITTDGKTLLGADDKAGIAEIMTALAVLQQKKIPHGDIRVAFTPDEEVGKGAKHFDVDAFDARWAYTVDGGGVGELEFENFNAASVNIKIVGNNVHPGTAKGVMVNALSLAARIHAEVPADESPEMTEGYEGFYHLASMKGTVERADMHYIIRDFDRKQFEARKRKMMEIAKKVGKGLHPDCYIELVIEDSYYNMREKVVEHPHILDIAQQAMRDCDIEPELKPIRGGTDGAQLSFMGLPCPNLFTGGYNYHGKHEFVTLEGMEKAVQVIVRIAELTAQRK.

His-78 lines the Zn(2+) pocket. The active site involves Asp-80. Position 140 (Asp-140) interacts with Zn(2+). Glu-173 serves as the catalytic Proton acceptor. Residues Glu-174, Asp-196, and His-379 each contribute to the Zn(2+) site.

Belongs to the peptidase M20B family. The cofactor is Zn(2+).

It is found in the cytoplasm. The catalysed reaction is Release of the N-terminal residue from a tripeptide.. Cleaves the N-terminal amino acid of tripeptides. In Escherichia coli (strain K12 / MC4100 / BW2952), this protein is Peptidase T.